The following is a 158-amino-acid chain: Scytalone dehydratase-like protein CPUR_05428 (158 aa).

Positions 24 and 44 each coordinate substrate. Residues His79 and His104 contribute to the active site.

It belongs to the scytalone dehydratase family.

It functions in the pathway pigment biosynthesis. Functionally, scytalone dehydratase-like protein; part of the ergochrome gene cluster responsible for the typical purple-black color of the ergot sclerotia. The ergochrome gene cluster produces several ergot pigments including the yellow ergochrome secalonic acid and its derivatives, as well as the red anthraquinones endocrocin and clavorubin. The pathway begins with the synthesis of atrochrysone thioester by the polyketide synthase (PKS) CPUR_05437. The atrochrysone carboxyl ACP thioesterase CPUR_05436 then breaks the thioester bond and releases the atrochrysone carboxylic acid from CPUR_05437. The atrochrysone carboxylic acid is then converted to atrochrysone which is further transformed into emodin anthrone. The next step is performed by the anthrone oxygenase CPUR_05434 that catalyzes the oxidation of emodinanthrone to emodin. Emodin is further modified to yield monodictyphenone via several steps involving CPUR_05427, CPUR_05428, CPUR_05429 and CPUR_05430. The short chain dehydrogenase/reductase CPUR_05418 then catalyzes the C-5 ketoreduction to give the xanthone skeleton of the monomeric units. Ergochromes formation requires further dimerization steps of different xanthone units, probably catalyzed by the cytochrome P450 monooxygenase CPUR_05419. CPUR_05425, CPUR_05426 and CPUR_05431 are unique to Claviceps, thus it is likely that they are involved in further modification of xanthone units or in their dimerization. The yellow ergochromes and the red anthraquinone pigments endocrocin and clavorubin are products from the same PKS derived precursors and the latter are likely shunt products in the pathway of xanthone biosynthesis. It is proposed that atrochrysone carboxylic acid released from the PKS CPUR_05437 can also be converted to endocrocin anthrone which is further oxidized into endocrocin by CPUR_05435. Endocrocin could be then modified to clavorubin, possibly by CPUR_05423 and CPUR_05431. Clavorubin is the principal anthraquinone metabolite produced by the cluster with a much higher yield compared to endocrocin. This chain is Scytalone dehydratase-like protein CPUR_05428, found in Claviceps purpurea (strain 20.1) (Ergot fungus).